The primary structure comprises 261 residues: Triosephosphate isomerase (261 aa).

A substrate-binding site is contributed by 10–12 (NWK). Histidine 100 (electrophile) is an active-site residue. Catalysis depends on glutamate 172, which acts as the Proton acceptor. Substrate is bound by residues glycine 178, serine 218, and 239 to 240 (GG).

It belongs to the triosephosphate isomerase family. Homodimer.

It is found in the cytoplasm. The enzyme catalyses D-glyceraldehyde 3-phosphate = dihydroxyacetone phosphate. It participates in carbohydrate biosynthesis; gluconeogenesis. Its pathway is carbohydrate degradation; glycolysis; D-glyceraldehyde 3-phosphate from glycerone phosphate: step 1/1. In terms of biological role, involved in the gluconeogenesis. Catalyzes stereospecifically the conversion of dihydroxyacetone phosphate (DHAP) to D-glyceraldehyde-3-phosphate (G3P). This is Triosephosphate isomerase from Mycolicibacterium vanbaalenii (strain DSM 7251 / JCM 13017 / BCRC 16820 / KCTC 9966 / NRRL B-24157 / PYR-1) (Mycobacterium vanbaalenii).